The primary structure comprises 245 residues: Exosome complex component RRP41 (245 aa).

An N-acetylalanine modification is found at Ala-2.

This sequence belongs to the RNase PH family. In terms of assembly, component of the RNA exosome core complex (Exo-9), composed of EXOSC1, EXOSC2, EXOSC3, EXOSC4, EXOSC5, EXOSC6, EXOSC7, EXOSC8 and EXOSC9; within the complex interacts with EXOSC2, EXOSC7 and EXOSC9. The catalytically inactive RNA exosome core complex (Exo-9) associates with the catalytic subunit EXOSC10/RRP6. Exo-9 may associate with DIS3 to form the nucleolar exosome complex, or DIS3L to form the cytoplasmic exosome complex. Exo-9 is formed by a hexameric base ring consisting of the heterodimers EXOSC4-EXOSC9, EXOSC5-EXOSC8 and EXOSC6-EXOSC7, and a cap ring consisting of EXOSC1, EXOSC2 and EXOSC3. The RNA exosome complex associates with cofactors C1D/RRP47, MPHOSPH6/MPP6 and MTREX/MTR4. Interacts with DDX60. Interacts with DIS3; the interaction is direct.

It is found in the cytoplasm. The protein localises to the nucleus. It localises to the nucleolus. The protein resides in the nucleoplasm. Non-catalytic component of the RNA exosome complex which has 3'-&gt;5' exoribonuclease activity and participates in a multitude of cellular RNA processing and degradation events. In the nucleus, the RNA exosome complex is involved in proper maturation of stable RNA species such as rRNA, snRNA and snoRNA, in the elimination of RNA processing by-products and non-coding 'pervasive' transcripts, such as antisense RNA species and promoter-upstream transcripts (PROMPTs), and of mRNAs with processing defects, thereby limiting or excluding their export to the cytoplasm. The RNA exosome may be involved in Ig class switch recombination (CSR) and/or Ig variable region somatic hypermutation (SHM) by targeting AICDA deamination activity to transcribed dsDNA substrates. In the cytoplasm, the RNA exosome complex is involved in general mRNA turnover and specifically degrades inherently unstable mRNAs containing AU-rich elements (AREs) within their 3' untranslated regions, and in RNA surveillance pathways, preventing translation of aberrant mRNAs. It seems to be involved in degradation of histone mRNA. The catalytic inactive RNA exosome core complex of 9 subunits (Exo-9) is proposed to play a pivotal role in the binding and presentation of RNA for ribonucleolysis, and to serve as a scaffold for the association with catalytic subunits and accessory proteins or complexes. EXOSC4 binds to ARE-containing RNAs. This Homo sapiens (Human) protein is Exosome complex component RRP41 (EXOSC4).